A 450-amino-acid polypeptide reads, in one-letter code: Methionine aminopeptidase 2-2 (450 aa).

Basic and acidic residues-rich tracts occupy residues 1–10 (MGAKISEDHP) and 30–39 (RGAHLSRDGD). A disordered region spans residues 1–100 (MGAKISEDHP…PPRVPLSELF (100 aa)). A compositionally biased stretch (acidic residues) spans 47–56 (GDDDDDDDEG). Residues 69 to 86 (KKKKKKRKPKKKKAKKAT) are compositionally biased toward basic residues. His-211 provides a ligand contact to substrate. A divalent metal cation-binding residues include Asp-232, Asp-243, and His-302. A substrate-binding site is contributed by His-310. A divalent metal cation is bound by residues Glu-335 and Glu-431.

This sequence belongs to the peptidase M24A family. Methionine aminopeptidase eukaryotic type 2 subfamily. The cofactor is Co(2+). Requires Zn(2+) as cofactor. Mn(2+) is required as a cofactor. Fe(2+) serves as cofactor.

The protein localises to the cytoplasm. The catalysed reaction is Release of N-terminal amino acids, preferentially methionine, from peptides and arylamides.. In terms of biological role, cotranslationally removes the N-terminal methionine from nascent proteins. The N-terminal methionine is often cleaved when the second residue in the primary sequence is small and uncharged (Met-Ala-, Cys, Gly, Pro, Ser, Thr, or Val). The chain is Methionine aminopeptidase 2-2 from Fusarium vanettenii (strain ATCC MYA-4622 / CBS 123669 / FGSC 9596 / NRRL 45880 / 77-13-4) (Fusarium solani subsp. pisi).